Reading from the N-terminus, the 169-residue chain is Ureidoglycolate lyase (169 aa).

The protein belongs to the ureidoglycolate lyase family. In terms of assembly, homodimer. It depends on Ni(2+) as a cofactor.

It catalyses the reaction (S)-ureidoglycolate = urea + glyoxylate. The protein operates within nitrogen metabolism; (S)-allantoin degradation. In terms of biological role, catalyzes the catabolism of the allantoin degradation intermediate (S)-ureidoglycolate, generating urea and glyoxylate. Involved in the utilization of allantoin as nitrogen source. This is Ureidoglycolate lyase from Pseudomonas aeruginosa (strain LESB58).